The following is a 238-amino-acid chain: Uridylate kinase (238 aa).

Residue Lys-12–Gly-15 participates in ATP binding. Gly-54 lines the UMP pocket. ATP contacts are provided by Gly-55 and Arg-59. UMP-binding positions include Asp-74 and Thr-135 to Thr-142. ATP is bound by residues Thr-162, Asn-163, Tyr-168, and Asp-171.

This sequence belongs to the UMP kinase family. As to quaternary structure, homohexamer.

The protein localises to the cytoplasm. The enzyme catalyses UMP + ATP = UDP + ADP. The protein operates within pyrimidine metabolism; CTP biosynthesis via de novo pathway; UDP from UMP (UMPK route): step 1/1. Inhibited by UTP. Functionally, catalyzes the reversible phosphorylation of UMP to UDP. This is Uridylate kinase from Nitrobacter winogradskyi (strain ATCC 25391 / DSM 10237 / CIP 104748 / NCIMB 11846 / Nb-255).